Here is a 96-residue protein sequence, read N- to C-terminus: Integration host factor subunit beta (96 aa).

This sequence belongs to the bacterial histone-like protein family. In terms of assembly, heterodimer of an alpha and a beta chain.

Its function is as follows. This protein is one of the two subunits of integration host factor, a specific DNA-binding protein that functions in genetic recombination as well as in transcriptional and translational control. The protein is Integration host factor subunit beta of Caulobacter vibrioides (strain ATCC 19089 / CIP 103742 / CB 15) (Caulobacter crescentus).